A 226-amino-acid polypeptide reads, in one-letter code: 2-C-methyl-D-erythritol 4-phosphate cytidylyltransferase (226 aa).

This sequence belongs to the IspD/TarI cytidylyltransferase family. IspD subfamily.

It catalyses the reaction 2-C-methyl-D-erythritol 4-phosphate + CTP + H(+) = 4-CDP-2-C-methyl-D-erythritol + diphosphate. It participates in isoprenoid biosynthesis; isopentenyl diphosphate biosynthesis via DXP pathway; isopentenyl diphosphate from 1-deoxy-D-xylulose 5-phosphate: step 2/6. Catalyzes the formation of 4-diphosphocytidyl-2-C-methyl-D-erythritol from CTP and 2-C-methyl-D-erythritol 4-phosphate (MEP). This is 2-C-methyl-D-erythritol 4-phosphate cytidylyltransferase from Clostridium beijerinckii (strain ATCC 51743 / NCIMB 8052) (Clostridium acetobutylicum).